Consider the following 523-residue polypeptide: ADP-ribosylation factor GTPase-activating protein 3 (523 aa).

Residues 10–126 (LAIFKRLRSV…IKTLATQATR (117 aa)) form the Arf-GAP domain. The C4-type zinc finger occupies 25–48 (CFDCGAKNPSWASISYGVFLCIDC). Residues 162–206 (GAMQASAQPESASSTPWGLETTPEKHEGGPGQGPSVEGLNTPGKA) form a disordered region. A compositionally biased stretch (polar residues) spans 164–177 (MQASAQPESASSTP). A phosphoserine mark is found at serine 231 and serine 241. A disordered region spans residues 248 to 269 (QAQAVDKRKEQEDLARGAPKEE). Phosphoserine occurs at positions 270, 274, and 331. The disordered stretch occupies residues 308 to 424 (GFGSCRSGIS…YEPIGSTDEA (117 aa)). Polar residues predominate over residues 314 to 332 (SGISHSVTSDMQTIEQESP). Residues 348 to 361 (SYFSSSSKWSEQSS) are compositionally biased toward low complexity. Serine 377 carries the phosphoserine modification. The segment covering 385–396 (YWKKDSSRDPEP) has biased composition (basic and acidic residues). A phosphoserine mark is found at serine 435, serine 458, serine 460, serine 462, serine 464, and serine 465.

The protein resides in the cytoplasm. Its subcellular location is the golgi apparatus membrane. With respect to regulation, GAP activity stimulated by phosphatidylinositol 4,5-bisphosphate (PIP2). In terms of biological role, GTPase-activating protein (GAP) for ADP ribosylation factor 1 (ARF1). Hydrolysis of ARF1-bound GTP may lead to dissociation of coatomer from Golgi-derived membranes to allow fusion with target membranes. In Mus musculus (Mouse), this protein is ADP-ribosylation factor GTPase-activating protein 3 (Arfgap3).